Here is a 309-residue protein sequence, read N- to C-terminus: MPQIVIAALYKFVSLPDFEALREPLQAFCIENEIKGTLLLAQEGINGTVAGRREAIDALLAYFGKDARLADIDHKESYEEEQPFYRMKVKLKKEIVTMGVEGIDPNNIVGTYVEPKDWNSLIDDPEVIVVDTRNNYEYDIGTFEGALNPNTESFRELPEYVAKNLDPAKHKKVAMFCTGGIRCEKSTAFMKQRGFEEVYHLKGGILKYLEEVPEEQTRWKGECFVFDNRVAVNHALEKGTYDLCHGCRYPITEEDKKSEKYIEGVACPHCHDTQTPDQRARFMERQKQVQLAKARKQAHIGAPAPSRQK.

A Rhodanese domain is found at 123–217 (DDPEVIVVDT…YLEEVPEEQT (95 aa)). The Cysteine persulfide intermediate role is filled by Cys-177.

This sequence belongs to the TrhO family.

The enzyme catalyses uridine(34) in tRNA + AH2 + O2 = 5-hydroxyuridine(34) in tRNA + A + H2O. Functionally, catalyzes oxygen-dependent 5-hydroxyuridine (ho5U) modification at position 34 in tRNAs. This is tRNA uridine(34) hydroxylase from Saccharophagus degradans (strain 2-40 / ATCC 43961 / DSM 17024).